The primary structure comprises 345 residues: Isopentenyl-diphosphate delta-isomerase (345 aa).

Residue 6-7 coordinates substrate; that stretch reads RK. FMN-binding positions include 63–65, Ser-93, and Asn-122; that span reads SMT. Position 93 to 95 (93 to 95) interacts with substrate; it reads SQR. Residue Gln-156 coordinates substrate. A Mg(2+)-binding site is contributed by Glu-157. Residues Lys-188, Thr-218, 265–267, and 286–287 contribute to the FMN site; these read GLR and AL.

This sequence belongs to the IPP isomerase type 2 family. Homooctamer. Dimer of tetramers. FMN serves as cofactor. NADPH is required as a cofactor. The cofactor is Mg(2+).

Its subcellular location is the cytoplasm. It carries out the reaction isopentenyl diphosphate = dimethylallyl diphosphate. In terms of biological role, involved in the biosynthesis of isoprenoids. Catalyzes the 1,3-allylic rearrangement of the homoallylic substrate isopentenyl (IPP) to its allylic isomer, dimethylallyl diphosphate (DMAPP). The sequence is that of Isopentenyl-diphosphate delta-isomerase from Archaeoglobus fulgidus (strain ATCC 49558 / DSM 4304 / JCM 9628 / NBRC 100126 / VC-16).